Here is a 356-residue protein sequence, read N- to C-terminus: Chitin elicitor-binding protein (356 aa).

The first 28 residues, 1 to 28 (MASLTAALATPAAAALLLLVLLAAPASA), serve as a signal peptide directing secretion. N30 is a glycosylation site (N-linked (GlcNAc...) asparagine). 4 disulfides stabilise this stretch: C33–C100, C41–C164, C98–C162, and C100–C164. 50–51 (PN) provides a ligand contact to chitin. N63 and N89 each carry an N-linked (GlcNAc...) asparagine glycan. 2 LysM domains span residues 111-158 (PIYV…TLWI) and 175-219 (LAYS…ILDV). Residues 117–123 (PQDGLDA), N142, 145–152 (PDPNKINV), T155, and G182 each bind chitin. N-linked (GlcNAc...) asparagine glycosylation occurs at N151. Residue N184 is glycosylated (N-linked (GlcNAc...) asparagine). Residues S186 and 211–213 (LQM) contribute to the chitin site. Cystine bridges form between C224–C257 and C252–C274. N-linked (GlcNAc...) asparagine glycosylation is found at N265, N281, N290, N306, and N319. Residues 336–356 (RSMWSMSVISFHMVLIIICFL) traverse the membrane as a helical segment.

In terms of assembly, forms homooligomer. Interacts with CERK1. Binds to chitin oligosaccharide elicitor. Interacts with LYP4 and LYP6. N-glycosylated. In terms of tissue distribution, expressed in seedlings, roots, shoots, stems and flowers.

The protein localises to the cell membrane. Functionally, chitin elicitor-binding protein involved in the perception and transduction of chitin oligosaccharide elicitor signal for defense responses. This Oryza sativa subsp. japonica (Rice) protein is Chitin elicitor-binding protein.